A 400-amino-acid chain; its full sequence is Na(+)/H(+) antiporter NhaA (400 aa).

Transmembrane regions (helical) follow at residues 26 to 46 (AGGI…NSPL), 71 to 91 (LIHW…GMEV), 107 to 127 (IFPA…YWFI), 137 to 157 (GWAI…ALLS), 166 to 186 (IFLL…IALF), 189 to 209 (HGLS…LILL), 212 to 232 (FKVS…ASVL), 233 to 253 (KSGV…PLKG), 273 to 293 (FVIL…GIDV), 299 to 319 (PLLL…IFGF), 340 to 360 (IFAV…LASL), and 373 to 393 (LSRL…YLFL).

It belongs to the NhaA Na(+)/H(+) (TC 2.A.33) antiporter family.

The protein localises to the cell inner membrane. The catalysed reaction is Na(+)(in) + 2 H(+)(out) = Na(+)(out) + 2 H(+)(in). Na(+)/H(+) antiporter that extrudes sodium in exchange for external protons. In Haemophilus influenzae (strain 86-028NP), this protein is Na(+)/H(+) antiporter NhaA.